We begin with the raw amino-acid sequence, 153 residues long: SsrA-binding protein (153 aa).

The protein belongs to the SmpB family.

It is found in the cytoplasm. Functionally, required for rescue of stalled ribosomes mediated by trans-translation. Binds to transfer-messenger RNA (tmRNA), required for stable association of tmRNA with ribosomes. tmRNA and SmpB together mimic tRNA shape, replacing the anticodon stem-loop with SmpB. tmRNA is encoded by the ssrA gene; the 2 termini fold to resemble tRNA(Ala) and it encodes a 'tag peptide', a short internal open reading frame. During trans-translation Ala-aminoacylated tmRNA acts like a tRNA, entering the A-site of stalled ribosomes, displacing the stalled mRNA. The ribosome then switches to translate the ORF on the tmRNA; the nascent peptide is terminated with the 'tag peptide' encoded by the tmRNA and targeted for degradation. The ribosome is freed to recommence translation, which seems to be the essential function of trans-translation. This Sulfurovum sp. (strain NBC37-1) protein is SsrA-binding protein.